Here is a 213-residue protein sequence, read N- to C-terminus: Receptor-binding cancer antigen expressed on SiSo cells (213 aa).

The Extracellular segment spans residues 1–7; it reads MAITQFR. A helical; Signal-anchor for type III membrane protein membrane pass occupies residues 8–27; the sequence is LFKVCTCLATVFSFLKRLIC. The Cytoplasmic segment spans residues 28-213; sequence RSGRGRKLSG…EQNKIGVKLS (186 aa). A Phosphoserine modification is found at S36. T41 carries the phosphothreonine modification. Position 94 is a phosphotyrosine (Y94). A coiled-coil region spans residues 163 to 211; sequence EDAAWQAEEVLRQQKIADREKRAAEQQRKKMEKEAQRLMKKEQNKIGVK. Basic and acidic residues predominate over residues 179 to 206; the sequence is ADREKRAAEQQRKKMEKEAQRLMKKEQN. The segment at 179–213 is disordered; sequence ADREKRAAEQQRKKMEKEAQRLMKKEQNKIGVKLS.

Homodimer. In terms of tissue distribution, widely expressed. Expressed in heart, brain, spleen, liver, kidney and testis.

The protein localises to the golgi apparatus membrane. Functionally, may participate in suppression of cell proliferation and induces apoptotic cell death through activation of interleukin-1-beta converting enzyme (ICE)-like proteases. The protein is Receptor-binding cancer antigen expressed on SiSo cells (Ebag9) of Mus musculus (Mouse).